We begin with the raw amino-acid sequence, 257 residues long: Imidazole glycerol phosphate synthase subunit HisF (257 aa).

Active-site residues include Asp12 and Asp131.

The protein belongs to the HisA/HisF family. As to quaternary structure, heterodimer of HisH and HisF.

The protein localises to the cytoplasm. The enzyme catalyses 5-[(5-phospho-1-deoxy-D-ribulos-1-ylimino)methylamino]-1-(5-phospho-beta-D-ribosyl)imidazole-4-carboxamide + L-glutamine = D-erythro-1-(imidazol-4-yl)glycerol 3-phosphate + 5-amino-1-(5-phospho-beta-D-ribosyl)imidazole-4-carboxamide + L-glutamate + H(+). The protein operates within amino-acid biosynthesis; L-histidine biosynthesis; L-histidine from 5-phospho-alpha-D-ribose 1-diphosphate: step 5/9. Its function is as follows. IGPS catalyzes the conversion of PRFAR and glutamine to IGP, AICAR and glutamate. The HisF subunit catalyzes the cyclization activity that produces IGP and AICAR from PRFAR using the ammonia provided by the HisH subunit. This chain is Imidazole glycerol phosphate synthase subunit HisF, found in Teredinibacter turnerae (strain ATCC 39867 / T7901).